The sequence spans 147 residues: uncharacterized protein (147 aa).

This is an uncharacterized protein from Saccharomyces cerevisiae (strain ATCC 204508 / S288c) (Baker's yeast).